Reading from the N-terminus, the 111-residue chain is Mitochondrial import inner membrane translocase subunit TIM14 (111 aa).

Residues 1–3 (MTG) are Mitochondrial intermembrane-facing. The helical transmembrane segment at 4–24 (GLIAAGLGLAAVGFGARYVLR) threads the bilayer. Residues 25–111 (NQALIKKGME…AKDLMESTKS (87 aa)) lie on the Mitochondrial matrix side of the membrane. The region spanning 58–111 (EAAKILGITPSAKPAKIKDAHKKVMIVNHPDRGGSPYLAAKINEAKDLMESTKS) is the J domain.

This sequence belongs to the TIM14 family. As to quaternary structure, probable component of the PAM complex at least composed of a mitochondrial HSP70 protein, GrpE, tim-44, tim-16 and tim-14.

It localises to the mitochondrion inner membrane. Its function is as follows. Probable component of the PAM complex, a complex required for the translocation of transit peptide-containing proteins from the inner membrane into the mitochondrial matrix in an ATP-dependent manner. May act as a co-chaperone that stimulate the ATP-dependent activity. This Caenorhabditis briggsae protein is Mitochondrial import inner membrane translocase subunit TIM14 (dnj-21).